The sequence spans 198 residues: Guanylate kinase (198 aa).

Glycine 2 is subject to N-acetylglycine. The Guanylate kinase-like domain occupies proline 4 to serine 186. ATP is bound at residue glycine 14 to threonine 19. Residue serine 37–lysine 51 coordinates substrate. Residues arginine 44, arginine 137, and arginine 148 contribute to the active site. Asparagine 171–aspartate 172 is an ATP binding site.

The protein belongs to the guanylate kinase family. As to quaternary structure, monomer. Interacts with RD3.

The protein resides in the photoreceptor inner segment. Its subcellular location is the cytoplasm. It is found in the cytosol. It carries out the reaction GMP + ATP = GDP + ADP. With respect to regulation, up-regulated by RD3. Catalyzes the phosphorylation of GMP to GDP. Essential enzyme for recycling GMP and indirectly, cyclic GMP (cGMP). Involved in the cGMP metabolism in photoreceptors. In Sus scrofa (Pig), this protein is Guanylate kinase (GUK1).